The chain runs to 352 residues: Elongation factor Ts (352 aa).

Positions 81–84 (TDFV) are involved in Mg(2+) ion dislocation from EF-Tu.

This sequence belongs to the EF-Ts family.

It is found in the cytoplasm. Functionally, associates with the EF-Tu.GDP complex and induces the exchange of GDP to GTP. It remains bound to the aminoacyl-tRNA.EF-Tu.GTP complex up to the GTP hydrolysis stage on the ribosome. The chain is Elongation factor Ts from Campylobacter hominis (strain ATCC BAA-381 / DSM 21671 / CCUG 45161 / LMG 19568 / NCTC 13146 / CH001A).